The following is a 186-amino-acid chain: TATA box-binding protein-like 1 (186 aa).

Belongs to the TBP family.

The protein resides in the cytoplasm. It localises to the nucleus. Its function is as follows. Part of a specialized transcription system that mediates the transcription of most ribosomal proteins through the 5'-TCT-3' motif which is a core promoter element at these genes. Seems to also mediate the transcription of NF1. Does not bind the TATA box. Members of the TBP family are differentially required to regulate transcription and development during early embryogenesis. Particularly regulates genes that have a role in catabolism. The sequence is that of TATA box-binding protein-like 1 (tbpl1) from Xenopus tropicalis (Western clawed frog).